Consider the following 513-residue polypeptide: Probable hydrolase YhcX (513 aa).

The N-acetyltransferase domain maps to 14–212; the sequence is MVIRNIEEKD…YATLMEWNNV (199 aa). A CN hydrolase domain is found at 229–484; that stretch reads VRICVIQYEM…EMVVIGDVDL (256 aa). Catalysis depends on Glu-270, which acts as the Proton acceptor. Catalysis depends on Lys-345, which acts as the Proton donor. The active-site Nucleophile is Cys-379.

Belongs to the carbon-nitrogen hydrolase superfamily. NIT1/NIT2 family.

This is Probable hydrolase YhcX (yhcX) from Bacillus subtilis (strain 168).